The following is a 582-amino-acid chain: Proline--tRNA ligase (582 aa).

It belongs to the class-II aminoacyl-tRNA synthetase family. ProS type 1 subfamily. Homodimer.

The protein resides in the cytoplasm. The catalysed reaction is tRNA(Pro) + L-proline + ATP = L-prolyl-tRNA(Pro) + AMP + diphosphate. In terms of biological role, catalyzes the attachment of proline to tRNA(Pro) in a two-step reaction: proline is first activated by ATP to form Pro-AMP and then transferred to the acceptor end of tRNA(Pro). As ProRS can inadvertently accommodate and process non-cognate amino acids such as alanine and cysteine, to avoid such errors it has two additional distinct editing activities against alanine. One activity is designated as 'pretransfer' editing and involves the tRNA(Pro)-independent hydrolysis of activated Ala-AMP. The other activity is designated 'posttransfer' editing and involves deacylation of mischarged Ala-tRNA(Pro). The misacylated Cys-tRNA(Pro) is not edited by ProRS. This chain is Proline--tRNA ligase, found in Mycobacterium ulcerans (strain Agy99).